Consider the following 188-residue polypeptide: FMN-dependent NADPH-azoreductase (188 aa).

It belongs to the azoreductase type 2 family. Homotetramer. It depends on FMN as a cofactor.

Its function is as follows. Catalyzes the reductive cleavage of azo bond in aromatic azo compounds to the corresponding amines. Requires NADPH, but not NADH, as an electron donor for its activity. This is FMN-dependent NADPH-azoreductase (azo1) from Staphylococcus saprophyticus subsp. saprophyticus (strain ATCC 15305 / DSM 20229 / NCIMB 8711 / NCTC 7292 / S-41).